Consider the following 376-residue polypeptide: Succinyl-diaminopimelate desuccinylase (376 aa).

Residue H67 coordinates Zn(2+). Residue D69 is part of the active site. D100 serves as a coordination point for Zn(2+). Residue E134 is the Proton acceptor of the active site. Residues E135, E163, and H349 each contribute to the Zn(2+) site.

The protein belongs to the peptidase M20A family. DapE subfamily. As to quaternary structure, homodimer. Zn(2+) serves as cofactor. The cofactor is Co(2+).

The enzyme catalyses N-succinyl-(2S,6S)-2,6-diaminopimelate + H2O = (2S,6S)-2,6-diaminopimelate + succinate. It functions in the pathway amino-acid biosynthesis; L-lysine biosynthesis via DAP pathway; LL-2,6-diaminopimelate from (S)-tetrahydrodipicolinate (succinylase route): step 3/3. Functionally, catalyzes the hydrolysis of N-succinyl-L,L-diaminopimelic acid (SDAP), forming succinate and LL-2,6-diaminopimelate (DAP), an intermediate involved in the bacterial biosynthesis of lysine and meso-diaminopimelic acid, an essential component of bacterial cell walls. The chain is Succinyl-diaminopimelate desuccinylase from Idiomarina loihiensis (strain ATCC BAA-735 / DSM 15497 / L2-TR).